Consider the following 89-residue polypeptide: UPF0335 protein Nwi_0989 (89 aa).

It belongs to the UPF0335 family.

This Nitrobacter winogradskyi (strain ATCC 25391 / DSM 10237 / CIP 104748 / NCIMB 11846 / Nb-255) protein is UPF0335 protein Nwi_0989.